We begin with the raw amino-acid sequence, 833 residues long: Leucine--tRNA ligase (833 aa).

A 'HIGH' region motif is present at residues 41 to 52; sequence PYPSGAGLHVGH. The 'KMSKS' region motif lies at 610–614; sequence KMSKS. Residue Lys-613 coordinates ATP.

It belongs to the class-I aminoacyl-tRNA synthetase family.

The protein resides in the cytoplasm. It catalyses the reaction tRNA(Leu) + L-leucine + ATP = L-leucyl-tRNA(Leu) + AMP + diphosphate. The polypeptide is Leucine--tRNA ligase (Streptococcus pyogenes serotype M4 (strain MGAS10750)).